An 831-amino-acid chain; its full sequence is MAIQKKHGKGRLDKWYKLAKEKGYRARAAFKLIQLNKKYGFLEKSKVALDLCAAPGSWCQVCAETMPTNSIIIGVDLAPIKPIPKVITFQSDITTEKCRATIRSHLKTWKADVVLHDGAPNVGTAWVQDSYNQAELALHSLKLATEFLIEGGTFVTKVFRSKDYNSLLWVCNQLFAKVEATKPPSSRNVSAEIFVVCRGFKAPKRIDPKLLDPRSVFEDVAGPAPNNEAKVYNPEVKKRKREGYEEGDYTQFKEISASEFINTVDPIAILGQYNKLSFEQPKNGDVALAALDKLPETTEEIRLCCADLKVLGRKEFKLLLKWRLKVREIFGFPSKKTQKAAVDEEVAVVENMDEELRIQEELQRIKEKETSKKKRERRRENEKKQKEIVRMQMNMTAPMDIGVEQEGPRGEGAMFRLKTIDQNAALNKIAKGKMAVIKETEKPKDYDFGSDGETDESDEEADRLEEELDNLYDQYRERKAAADAKYRAKKARKENGDDEWEGVSGDEEKGSDDDDDEELEVDSSDDDSDSEDGESGKKLITDLDGQPEEKDGLSKRAKNFFSQGIFAEIPGLLEEPESEEEEAQEAELVEAVEDLKVTKKEKKEAKETKAKSKKAAEESDDDDDFEVVKNNEDDDWENVEKKKKNGRPDIDIITAEAMTLAHQLATGEKTSYDVIDDGYTKHAFKDRDGLPDWFLDDESKHDKPHKPITKAAAQAIKEKLRAYNARPIKKVAEAKARKKFKQAQRLEKLKKKADMLAGDDGMSEKEKAASISKLMASVAKKTRRAPIKVVKAAGSNKGLQGRPKGVKGRYKMVDPRMKKELRAMKRISKKK.

Residues Gly56, Trp58, Asp76, Asp92, and Asp117 each contribute to the S-adenosyl-L-methionine site. The Proton acceptor role is filled by Lys157. The stretch at Val349 to Thr396 forms a coiled coil. 3 disordered regions span residues Lys442–Arg556, Ile569–Lys644, and Val790–Arg816. The segment covering Phe448–Asn470 has biased composition (acidic residues). Over residues Gln474–Tyr486 the composition is skewed to basic and acidic residues. Residues Gly496–Gly533 show a composition bias toward acidic residues. The segment covering Glu534–Ser554 has biased composition (basic and acidic residues). Positions Glu574 to Val592 are enriched in acidic residues. Over residues Glu593 to Glu617 the composition is skewed to basic and acidic residues.

It belongs to the class I-like SAM-binding methyltransferase superfamily. RNA methyltransferase RlmE family. SPB1 subfamily. As to quaternary structure, component of the nucleolar and nucleoplasmic pre-60S ribosomal particle.

Its subcellular location is the nucleus. The protein resides in the nucleolus. It catalyses the reaction a ribonucleotide in rRNA + S-adenosyl-L-methionine = a 2'-O-methylribonucleotide in rRNA + S-adenosyl-L-homocysteine + H(+). Functionally, required for proper assembly of pre-ribosomal particles during the biogenesis of the 60S ribosomal subunit. The chain is AdoMet-dependent rRNA methyltransferase spb1 (spb1) from Neurospora crassa (strain ATCC 24698 / 74-OR23-1A / CBS 708.71 / DSM 1257 / FGSC 987).